The following is a 538-amino-acid chain: Nicotinate phosphoribosyltransferase (538 aa).

The nicotinate site is built by Y21 and T210. H213 carries the phosphohistidine modification. Position 318 (R318) interacts with nicotinate. T380 serves as a coordination point for 5-phospho-alpha-D-ribose 1-diphosphate.

Belongs to the NAPRTase family. As to quaternary structure, homodimer. Mg(2+) serves as cofactor. It depends on Mn(2+) as a cofactor. In terms of processing, transiently phosphorylated on a His residue during the reaction cycle. Phosphorylation strongly increases the affinity for substrates and increases the rate of nicotinate D-ribonucleotide production. Dephosphorylation regenerates the low-affinity form of the enzyme, leading to product release.

Its subcellular location is the cytoplasm. It localises to the cytosol. It catalyses the reaction nicotinate + 5-phospho-alpha-D-ribose 1-diphosphate + ATP + H2O = nicotinate beta-D-ribonucleotide + ADP + phosphate + diphosphate. The protein operates within cofactor biosynthesis; NAD(+) biosynthesis; nicotinate D-ribonucleotide from nicotinate: step 1/1. Catalyzes the first step in the biosynthesis of NAD from nicotinic acid, the ATP-dependent synthesis of beta-nicotinate D-ribonucleotide from nicotinate and 5-phospho-D-ribose 1-phosphate. Helps prevent cellular oxidative stress via its role in NAD biosynthesis. The chain is Nicotinate phosphoribosyltransferase (Naprt) from Rattus norvegicus (Rat).